The following is a 586-amino-acid chain: MPAGGGRWGSFWEQRTRQLQSQVRAKEDKIAELETENAVLLLKLAEYKGKIEKSRSEATRISTLYNKQQRLQRNTRSALSQLDGVIQKLNQDIQAFHSSSRALLRDYQDEYQDRVSAIVTAVQRTRQSAETLLACQAKVVHLEQALQDVSARHQLERQRRKALHNSLVELRGNIRVHCRIRPLLPFDSESDDPVLQSSSISREVAHAVDDETVLVKCDRPGHPLINKTYHFERVYGPAESQSAVFGDVCPLLTSLLDGYNVCVMAYGQTGSGKSYTMLGPHSDDGPVLPLDPQSDLGIIPRAAEELFRLISENPSRSPKVEVSIVEVYNNDIFDLLAKDTVAAVSGVKREVMTAKDGRTEVALLASEAVGSASKLMELVRGGLQLRAKHPTLVHADSSRSHLIITVTLTTAACSDSTADQACSATHPGEQTEAGRAGRSRRTSQGASAPQPVPGDPAGRAEQVQARLQLVDLAGSECIGVSGVTGSALRETACINRSLAALADVLGALSEHRSHIPYRNSRLTHLLQDCLGGDAKLLVILCISPSQRHLAQTLQGLGFGIRARQVQRGPARKRPPSSQMEGKRRPD.

Residues 10-94 are a coiled coil; it reads SFWEQRTRQL…VIQKLNQDIQ (85 aa). In terms of domain architecture, Kinesin motor spans 173 to 565; the sequence is NIRVHCRIRP…LGFGIRARQV (393 aa). Position 267–274 (267–274) interacts with ATP; it reads GQTGSGKS. Disordered regions lie at residues 417–460 and 564–586; these read TADQ…AGRA and QVQRGPARKRPPSSQMEGKRRPD.

Belongs to the TRAFAC class myosin-kinesin ATPase superfamily. Kinesin family. As to quaternary structure, homotetramer.

It localises to the cytoplasm. Its subcellular location is the cytoskeleton. It is found in the microtubule organizing center. The protein resides in the centrosome. Its function is as follows. Minus-end microtubule-dependent motor protein. Acts as a negative regulator of centrosome separation required to prevent premature centrosome separation during interphase. Required to maintain a centered nucleus to ensure that the spindle is stably oriented at the onset of mitosis. May also act as a negative regulator of amino acid starvation-induced autophagy. The chain is Kinesin-like protein KIF25 from Macaca fascicularis (Crab-eating macaque).